Here is a 100-residue protein sequence, read N- to C-terminus: MAKKSLIEREKKRKKLVQEYNSIRKLLKEEIKKASSLKEKWEIHKKSQILPRNSAPTRLHRRCSLTGRSRSNYRDFGLCRHVLREMAHTCSLPGVTKSSW.

It belongs to the universal ribosomal protein uS14 family. In terms of assembly, part of the 30S ribosomal subunit.

The protein resides in the plastid. The protein localises to the chloroplast. Binds 16S rRNA, required for the assembly of 30S particles. The sequence is that of Small ribosomal subunit protein uS14c from Psilotum nudum (Whisk fern).